We begin with the raw amino-acid sequence, 76 residues long: Acyl carrier protein (76 aa).

Residues 1–76 (MSVEEKISKI…DAIAYIKNKQ (76 aa)) form the Carrier domain. An O-(pantetheine 4'-phosphoryl)serine modification is found at serine 36.

Belongs to the acyl carrier protein (ACP) family. 4'-phosphopantetheine is transferred from CoA to a specific serine of apo-ACP by AcpS. This modification is essential for activity because fatty acids are bound in thioester linkage to the sulfhydryl of the prosthetic group.

The protein resides in the cytoplasm. It functions in the pathway lipid metabolism; fatty acid biosynthesis. Its function is as follows. Carrier of the growing fatty acid chain in fatty acid biosynthesis. In Nitratidesulfovibrio vulgaris (strain DSM 19637 / Miyazaki F) (Desulfovibrio vulgaris), this protein is Acyl carrier protein.